The following is a 395-amino-acid chain: 3-sulfinopropanoyl-CoA desulfinase (395 aa).

FAD is bound by residues 121–124 (ICIS), serine 130, and 153–156 (YWIT). 243–244 (YN) is a substrate binding site. FAD is bound by residues arginine 272, glutamine 339, serine 343, 366–370 (GGTAQ), and glutamine 387.

It belongs to the acyl-CoA dehydrogenase family. Homotrimer or homotetramer. The cofactor is FAD.

The catalysed reaction is 3-sulfinopropanoyl-CoA + H2O = propanoyl-CoA + sulfite + H(+). In terms of biological role, catalyzes the conversion 3-sulfinopropanoyl-CoA (3SP-CoA) to propanoyl-CoA by abstraction of sulfite. Does not show dehydrogenase activity. The protein is 3-sulfinopropanoyl-CoA desulfinase of Cupriavidus necator (strain ATCC 43291 / DSM 13513 / CCUG 52238 / LMG 8453 / N-1) (Ralstonia eutropha).